Consider the following 438-residue polypeptide: GTPase Der (438 aa).

2 EngA-type G domains span residues 4-168 (PVVA…PAGA) and 176-351 (VRIA…GEYR). GTP contacts are provided by residues 10–17 (GRPNVGKS), 57–61 (DTGGI), 120–123 (NKVD), 182–189 (GRPNVGKS), 229–233 (DTAGM), and 294–297 (NKWD). The KH-like domain occupies 352-436 (RQIPTSMLNR…PVRILFRRRE (85 aa)).

It belongs to the TRAFAC class TrmE-Era-EngA-EngB-Septin-like GTPase superfamily. EngA (Der) GTPase family. As to quaternary structure, associates with the 50S ribosomal subunit.

Its function is as follows. GTPase that plays an essential role in the late steps of ribosome biogenesis. This Desulforudis audaxviator (strain MP104C) protein is GTPase Der.